Consider the following 206-residue polypeptide: 3-demethoxyubiquinol 3-hydroxylase (206 aa).

Positions 55, 85, 88, 137, 169, and 172 each coordinate Fe cation.

It belongs to the COQ7 family. Fe cation is required as a cofactor.

It is found in the cell membrane. It catalyses the reaction a 5-methoxy-2-methyl-3-(all-trans-polyprenyl)benzene-1,4-diol + AH2 + O2 = a 3-demethylubiquinol + A + H2O. The protein operates within cofactor biosynthesis; ubiquinone biosynthesis. Functionally, catalyzes the hydroxylation of 2-nonaprenyl-3-methyl-6-methoxy-1,4-benzoquinol during ubiquinone biosynthesis. The sequence is that of 3-demethoxyubiquinol 3-hydroxylase from Aromatoleum aromaticum (strain DSM 19018 / LMG 30748 / EbN1) (Azoarcus sp. (strain EbN1)).